An 819-amino-acid polypeptide reads, in one-letter code: THO complex subunit 5B (819 aa).

The segment at 285 to 332 (ARQQSRKDSGMSSNTESSRLEDDGPDDDDDGQRRRKRPKKLTSKEGSD) is disordered.

It belongs to the THOC5 family. In terms of assembly, component of the THO complex, which is composed of THO1, THO2, THO3, THO5, THO6 and THO7.

It is found in the nucleus. In terms of biological role, acts as a component of the THO subcomplex of the TREX complex which is thought to couple mRNA transcription, processing and nuclear export. The polypeptide is THO complex subunit 5B (THO5B) (Arabidopsis thaliana (Mouse-ear cress)).